The primary structure comprises 433 residues: Myricetin 3-O-glucosyl 1,2-rhamnoside 6'-O-caffeoyltransferase AT2 (433 aa).

Residues His-157 and Asp-375 each act as proton acceptor in the active site.

Belongs to the plant acyltransferase family. Expressed in young cromes.

The catalysed reaction is myricetin 3-O-[beta-D-glucosyl-(1-&gt;2)-alpha-L-rhamnoside] + (E)-caffeoyl-CoA = myricetin 3-O-[(6-O-(E)-caffeoyl-beta-D-glucosyl)-(1-&gt;2)-alpha-L-rhamnoside] + CoA. It participates in flavonoid metabolism. Its function is as follows. Caffeoyltransferase involved in montbretin A (MbA) biosynthesis. Catalyzes the caffeoylation of myricetin 3-O-beta-D-glucosyl 1,2-alpha-L-rhamnoside (MRG) to produce myricetin 3-O-(6'-O-caffeoyl)-beta-D-glucosyl 1,2-alpha-L-rhamnoside (mini-MbA), a precursor of MbA. Mini-MbA and MbA are potent inhibitors of human pancreatic alpha-amylase and are being developed as drug candidates to treat type-2 diabetes. In vitro, is able to catalyze the caffeoylation of quercetin 3-O-sophoroside (QGG), although QGG may not be a physiological substrate in vivo. In vitro, can use coumaryl-CoA, feruloyl-CoA and acetyl-CoA, although these three acyl donors may not be physiological in vivo. The chain is Myricetin 3-O-glucosyl 1,2-rhamnoside 6'-O-caffeoyltransferase AT2 from Crocosmia x crocosmiiflora (Montbretia).